Consider the following 232-residue polypeptide: Small heat shock protein, chloroplastic (232 aa).

Over residues 1-25 (MAQSVSLSTIASPILSQKPGSSVKS) the composition is skewed to polar residues. Disordered stretches follow at residues 1–35 (MAQS…SFPL) and 48–81 (RAQA…RKPR). The N-terminal 46 residues, 1 to 46 (MAQSVSLSTIASPILSQKPGSSVKSTPPCMASFPLRRQLPRLGLRN), are a transit peptide targeting the chloroplast. Residues 55–78 (GDNKDNSVEVHRVNKDDQGTAVER) show a composition bias toward basic and acidic residues. The 109-residue stretch at 124–232 (IGGGEIRVPW…ERTVIDVQIQ (109 aa)) folds into the sHSP domain.

The protein belongs to the small heat shock protein (HSP20) family.

It is found in the plastid. It localises to the chloroplast. The sequence is that of Small heat shock protein, chloroplastic (HSP21) from Pisum sativum (Garden pea).